The following is a 245-amino-acid chain: MLQFTPPLQPATLILRYKRFLADIVTPAGEALTIHCANTGAMTGCATPGDTIWYSTSDNPKRKYPQSWELTQTQTGDWICVNTMRANELVNLAIEKNQIAELSGYNFVRKEVKYGEENSRIDLLLQAEDRRDCYIEVKSVTLLQQQCGYFPDAVTLRGQKHLRELQNRVVNGHRAVLFFAVLHTGIKQVAPARHIDRRYAELLVQAQQAGVEVICYGFQLSPDGIELNTRLPLLLDEMLSSENAE.

The protein belongs to the SfsA family.

This chain is Sugar fermentation stimulation protein homolog, found in Yersinia pestis bv. Antiqua (strain Nepal516).